The chain runs to 282 residues: Digeranylgeranylglyceryl phosphate synthase (282 aa).

The next 9 helical transmembrane spans lie at 15-35 (VIGA…WYLE), 36-56 (LKGI…GYVI), 81-100 (VNKA…ALSI), 104-121 (IYAL…IYYA), 131-151 (GNLL…LAFF), 159-179 (IIIP…VKGI), 201-221 (KSWR…PLPF), 222-242 (FIGF…PFTI), and 260-280 (YLKI…LPFF).

This sequence belongs to the UbiA prenyltransferase family. DGGGP synthase subfamily. Requires Mg(2+) as cofactor. The cofactor is Ca(2+).

It is found in the cell membrane. It catalyses the reaction sn-3-O-(geranylgeranyl)glycerol 1-phosphate + (2E,6E,10E)-geranylgeranyl diphosphate = 2,3-bis-O-(geranylgeranyl)-sn-glycerol 1-phosphate + diphosphate. It functions in the pathway membrane lipid metabolism; glycerophospholipid metabolism. Its activity is regulated as follows. Inhibited by EDTA in vitro. Its function is as follows. Prenyltransferase that catalyzes the transfer of the geranylgeranyl moiety of geranylgeranyl diphosphate (GGPP) to the C2 hydroxyl of (S)-3-O-geranylgeranylglyceryl phosphate (GGGP). This reaction is the second ether-bond-formation step in the biosynthesis of archaeal membrane lipids. Cannot use other prenyl donors, i.e. farnesyl diphosphate (FPP) and phytyl diphosphate. Moreover, 4-hydroxybenzoate, 1,4-dihydroxy 2-naphthoate, homogentisate, and alpha-glycerophosphate do not function as prenyl acceptor substrates. This is Digeranylgeranylglyceryl phosphate synthase (ubiA-2) from Saccharolobus solfataricus (strain ATCC 35092 / DSM 1617 / JCM 11322 / P2) (Sulfolobus solfataricus).